A 226-amino-acid chain; its full sequence is LysM and putative peptidoglycan-binding domain-containing protein 1 (226 aa).

A phosphoserine mark is found at Ser-23 and Ser-33. One can recognise a LysM domain in the interval 40 to 84; that stretch reads LEHQLEPGDTLAGLALKYGVTMEQIKRTNRLYTNDSIFLKKTLYI. Positions 95–156 are disordered; sequence NGLDSEEEND…PSHDLSASDF (62 aa). Over residues 98-107 the composition is skewed to acidic residues; the sequence is DSEEENDGEE. Position 99 is a phosphoserine (Ser-99). The segment covering 142–151 has biased composition (polar residues); the sequence is QETSTPSHDL. Ser-165, Ser-180, Ser-193, and Ser-211 each carry phosphoserine. The interval 170–226 is disordered; sequence AAAQKLRKGESGVPEEDTGLYPSSPRMQQRAVLGPVPLTRTSRTQTLRDQEDEIFKL. Over residues 215 to 226 the composition is skewed to basic and acidic residues; sequence TLRDQEDEIFKL.

This chain is LysM and putative peptidoglycan-binding domain-containing protein 1 (Lysmd1), found in Mus musculus (Mouse).